The following is a 497-amino-acid chain: Solute carrier family 2, facilitated glucose transporter member 6 (497 aa).

Residues 1–36 are Cytoplasmic-facing; that stretch reads MQEPLLRTEGLDYDTFPEVPATPGERERAGALKNRR. The Dileucine internalization motif signature appears at 5–6; that stretch reads LL. The helical transmembrane segment at 37–57 threads the bilayer; the sequence is VFLATFAAVLGNFSFGYALVY. The Extracellular segment spans residues 58 to 80; the sequence is TSPVIPELKLSSDPALHLDKIQA. A helical transmembrane segment spans residues 81–101; that stretch reads SWFGSVFTLGAAAGGLSAMLL. Over 102-115 the chain is Cytoplasmic; that stretch reads NDLLGRKLSIMFSA. The helical transmembrane segment at 116 to 136 threads the bilayer; that stretch reads VPSAIGYAIMAGARGLWMLLL. Over 137-138 the chain is Extracellular; that stretch reads GR. The helical transmembrane segment at 139 to 159 threads the bilayer; it reads MLTGFAGGLTAACIPVYVSEI. Topologically, residues 160 to 171 are cytoplasmic; the sequence is APPDVRGALGAT. A helical membrane pass occupies residues 172–192; that stretch reads PQLMAVFGSLSLYALGLLLPW. Residue Gln173 coordinates a D-hexose. Residue Arg193 is a topological domain, extracellular. A helical transmembrane segment spans residues 194 to 214; the sequence is WLAVAGEGPVLIMILLLSFMP. Over 215 to 273 the chain is Cytoplasmic; that stretch reads NSPRFLLSKSRDEEALQALTWLRADSEVHWEFEQIQDNVRRQSSRVSWAEAREPRVYRP. The helical transmembrane segment at 274-294 threads the bilayer; the sequence is VLIAVLMRFLQQLTGITPILV. 284 to 285 lines the a D-hexose pocket; that stretch reads QQ. The Extracellular segment spans residues 295-312; that stretch reads YLQTIFDNTSVVLPSQQD. An N-linked (GlcNAc...) asparagine glycan is attached at Asn302. A helical transmembrane segment spans residues 313 to 333; sequence AAIVGAVRLLSVLIAAVTMDL. The Cytoplasmic portion of the chain corresponds to 334-337; the sequence is AGRK. Residues 338–358 form a helical membrane-spanning segment; it reads VLLYVSASVMFAANLTLGLYV. Residues 359–385 are Extracellular-facing; the sequence is QFVPRPLTPNSTVEIVTLGDTAFNYLT. N-linked (GlcNAc...) asparagine glycosylation occurs at Asn368. A helical transmembrane segment spans residues 386 to 406; sequence LIPLLATMLFIMGYAMGWGPI. Topologically, residues 407–425 are cytoplasmic; sequence TWLLMSEVLPLRARGVASG. Trp408 serves as a coordination point for a D-hexose. Residues 426-446 traverse the membrane as a helical segment; sequence LCVLVSWLTAFVLTNYFLLAV. Position 447 (Asn447) is a topological domain, extracellular. Residues 448–468 form a helical membrane-spanning segment; the sequence is AFGLQVPFFFFSAICLLSLLF. The Cytoplasmic segment spans residues 469–497; it reads TGCCVPETRGRSLEQIEAFFHTRRMSFRP.

The protein belongs to the major facilitator superfamily. Sugar transporter (TC 2.A.1.1) family. Mainly expressed in brain and spleen. Also expressed in lung, heart, muscle, liver, kidney, fat, whole blood, testes, ovaries and uterus.

The protein localises to the lysosome membrane. In terms of biological role, probable sugar transporter that acts as a regulator of glycolysis in macrophages. Does not transport glucose. The sequence is that of Solute carrier family 2, facilitated glucose transporter member 6 from Mus musculus (Mouse).